The chain runs to 859 residues: MTATPGAAADAVRVEGAGACSDGGEEARYASSASLARMLYGADLSERVRRRHPAVCVEHQSGRPVALPSPLAADARRVTVVRAPMGSGKTTALLRWLGEALGATDASVLVVSCRRSFTRTLHERLRDAALPAFATYFDARSYVMTGAAYRRLLVQVESLHRVDEELLGDYDILVLDEVMSTLAQLYSPTMGRLHRVDALLHRLLRRCPRIVAMDATVNAQLVDLLAALRGAGSVHVVICDYASAGFLQRRCTVARRLGARVLAARLKGDAEDGAEDGGASFFTRLRARLEAGHNVCVFSSTVLFSELAARFCLTFTPSVLVLNSTRPAEGDVSRWRDVRVLIYTTVITVGLSFDHSYFHAMFAYVKPMSHGPDMVSVYQSLGRIRSLVDNELCVYFDSSAARPEPVFTPMLLNHVVAEDGGWPATFSEVTNLLCCSFRAACAPAFRGARGLALFPRFKYKHLFERCTLASASDSLNILHALLENNRVGFQLEALRSAHRRGILPLSRGRARRRPAAAADLRALAAGIPSPVSAEGLAEHPAVAAFADKYLRAGGAPPAALEELLRALNGPAARARFVNLAVLGGCLHVPAAAESLEVFAGIYRHYASGEVPVLTEAGAVETAALAPGLRWKPTALFGLRRMARALGLLRRRGGGEADDVADAAHGLTEPAIVELVGPPGGHDYAQCLLEIARCNITPAGVMARGPVVAVAARLSGRGFAQGRGVGLGAAAHAVSVFKVIWEEVFGARLQKSTQTFPGHARVKNLRKHEIVALLDLAGIDRAGRDTHRELYRLLMSHKARFASPKYSLRLPKWGRLLGFAARGPEPGPDAPPEASLEAALARVPALHWPCAAGAVDFCAL.

The Helicase ATP-binding domain occupies 70–235 (PLAADARRVT…AALRGAGSVH (166 aa)). 83–90 (APMGSGKT) serves as a coordination point for ATP.

This sequence belongs to the herpesviridae OriBP family. In terms of assembly, homodimer. Interacts with the major DNA-binding protein. Interacts with the helicase/primase component UL8 and the polymerase accessory protein.

It localises to the host nucleus. Its function is as follows. Functions as a docking protein to recruit essential components of the viral replication machinery to viral DNA origins. In the presence of the major DNA-binding protein, opens dsDNA leading to a conformational change in the origin that facilitates DNA unwinding and subsequent replication. The polypeptide is Replication origin-binding protein (UL9) (Bovine herpesvirus 1.1 (strain Cooper) (BoHV-1)).